The sequence spans 144 residues: Endoribonuclease YbeY (144 aa).

Residues H108, H112, and H118 each coordinate Zn(2+).

This sequence belongs to the endoribonuclease YbeY family. Zn(2+) serves as cofactor.

Its subcellular location is the cytoplasm. Functionally, single strand-specific metallo-endoribonuclease involved in late-stage 70S ribosome quality control and in maturation of the 3' terminus of the 16S rRNA. The polypeptide is Endoribonuclease YbeY (Phytoplasma australiense).